The following is a 501-amino-acid chain: Probable malate:quinone oxidoreductase (501 aa).

This sequence belongs to the MQO family. Requires FAD as cofactor.

The enzyme catalyses (S)-malate + a quinone = a quinol + oxaloacetate. Its pathway is carbohydrate metabolism; tricarboxylic acid cycle; oxaloacetate from (S)-malate (quinone route): step 1/1. The polypeptide is Probable malate:quinone oxidoreductase (Paenarthrobacter aurescens (strain TC1)).